A 349-amino-acid chain; its full sequence is Phenylalanine--tRNA ligase alpha subunit (349 aa).

Residue glutamate 259 participates in Mg(2+) binding.

The protein belongs to the class-II aminoacyl-tRNA synthetase family. Phe-tRNA synthetase alpha subunit type 1 subfamily. As to quaternary structure, tetramer of two alpha and two beta subunits. Mg(2+) serves as cofactor.

The protein resides in the cytoplasm. The catalysed reaction is tRNA(Phe) + L-phenylalanine + ATP = L-phenylalanyl-tRNA(Phe) + AMP + diphosphate + H(+). The polypeptide is Phenylalanine--tRNA ligase alpha subunit (Lactobacillus acidophilus (strain ATCC 700396 / NCK56 / N2 / NCFM)).